The primary structure comprises 177 residues: MDLSKIAVGVNPPYDLNAIIEIPQGGEPVKYEIDKESGALMVDRFLHTAMFYPANYGFIPHTLADDGDPADIMVVGPTPVVPGAIIRCRPIGTLMMVDEAGSDEKILAVPVDKLHPFYTGVTSWRDLPTILTEQIAHFFQHYKDLEKGKSTKISGWADPDETAEIIRTAIKRYNESY.

Substrate-binding residues include lysine 30, arginine 44, and tyrosine 56. The Mg(2+) site is built by aspartate 66, aspartate 71, and aspartate 103. Tyrosine 142 lines the substrate pocket.

This sequence belongs to the PPase family. As to quaternary structure, homohexamer. The cofactor is Mg(2+).

It is found in the cytoplasm. The enzyme catalyses diphosphate + H2O = 2 phosphate + H(+). Catalyzes the hydrolysis of inorganic pyrophosphate (PPi) forming two phosphate ions. This is Inorganic pyrophosphatase from Caulobacter vibrioides (strain ATCC 19089 / CIP 103742 / CB 15) (Caulobacter crescentus).